Consider the following 815-residue polypeptide: Ferripyoverdine receptor (815 aa).

An N-terminal signal peptide occupies residues 1 to 43 (MPAPHGLSPLSKAFLMRRAFQRRILPHSLAMALSLPLAGYVQA). Positions 161 to 271 (TPRETPQSIT…LGATINLIRK (111 aa)) constitute a TBDR plug domain. The region spanning 276 to 815 (EFKGHVELGA…NLMFSTRWDF (540 aa)) is the TBDR beta-barrel domain. The short motif at 798–815 (SASYGDPRNLMFSTRWDF) is the TonB C-terminal box element.

Belongs to the TonB-dependent receptor family.

The protein resides in the cell outer membrane. Its function is as follows. Receptor for the siderophore ferripyoverdine. The sequence is that of Ferripyoverdine receptor (fpvA) from Pseudomonas aeruginosa (strain ATCC 15692 / DSM 22644 / CIP 104116 / JCM 14847 / LMG 12228 / 1C / PRS 101 / PAO1).